A 164-amino-acid polypeptide reads, in one-letter code: Nucleotide-binding protein Helmi_22490 (164 aa).

This sequence belongs to the YajQ family.

Nucleotide-binding protein. This chain is Nucleotide-binding protein Helmi_22490, found in Heliobacterium modesticaldum (strain ATCC 51547 / Ice1).